A 216-amino-acid polypeptide reads, in one-letter code: Uracil phosphoribosyltransferase (216 aa).

5-phospho-alpha-D-ribose 1-diphosphate-binding positions include R84, R109, and 137 to 145; that span reads DPMLATGNT. Residues I202 and 207 to 209 each bind uracil; that span reads GDA. Residue D208 participates in 5-phospho-alpha-D-ribose 1-diphosphate binding.

This sequence belongs to the UPRTase family. Requires Mg(2+) as cofactor.

The catalysed reaction is UMP + diphosphate = 5-phospho-alpha-D-ribose 1-diphosphate + uracil. The protein operates within pyrimidine metabolism; UMP biosynthesis via salvage pathway; UMP from uracil: step 1/1. Allosterically activated by GTP. Its function is as follows. Catalyzes the conversion of uracil and 5-phospho-alpha-D-ribose 1-diphosphate (PRPP) to UMP and diphosphate. The chain is Uracil phosphoribosyltransferase from Synechocystis sp. (strain ATCC 27184 / PCC 6803 / Kazusa).